A 266-amino-acid chain; its full sequence is MKMKLYRAYAKVNIFLKIQGSRGNYHEIVSRFMRVPSLYDELSFVPKESSEEFELIGSFSCKREQNTIYKAYRALLEFLDEASGLHVENLMQKYAVKVTKNIPTFAGLGGGSSDAATFLKMCNEVLHLGLSQNELALIGLHVGADVPFFIYGYNSANVSGIGEVVEEFKEELLDIEVFTPQLEISTPKVYNLYRENFYNPVDGFEVERLKKISSKDALSAMSAAEANDLFAPAIQLYKELKNHYKYGYYFSGSGSSFFRVKEKENI.

K11 is an active-site residue. 103-113 contacts ATP; it reads PTFAGLGGGSS. D145 is a catalytic residue.

This sequence belongs to the GHMP kinase family. IspE subfamily.

The catalysed reaction is 4-CDP-2-C-methyl-D-erythritol + ATP = 4-CDP-2-C-methyl-D-erythritol 2-phosphate + ADP + H(+). The protein operates within isoprenoid biosynthesis; isopentenyl diphosphate biosynthesis via DXP pathway; isopentenyl diphosphate from 1-deoxy-D-xylulose 5-phosphate: step 3/6. Functionally, catalyzes the phosphorylation of the position 2 hydroxy group of 4-diphosphocytidyl-2C-methyl-D-erythritol. The chain is 4-diphosphocytidyl-2-C-methyl-D-erythritol kinase from Sulfurimonas denitrificans (strain ATCC 33889 / DSM 1251) (Thiomicrospira denitrificans (strain ATCC 33889 / DSM 1251)).